The primary structure comprises 932 residues: Protocadherin gamma-A9 (932 aa).

The signal sequence occupies residues 1–28 (MAAPTKCQLRGRLVLLCSLLGMLWEARA). Cadherin domains lie at 29 to 133 (SQIR…APKF), 134 to 242 (QAES…APVF), 243 to 347 (AQRI…RPEV), 348 to 452 (TITS…PPAF), 453 to 562 (SQAS…APEI), and 570 to 683 (DGST…IPAD). At 29–692 (SQIRYSVPEE…DLEASDLTLY (664 aa)) the chain is on the extracellular side. N-linked (GlcNAc...) asparagine glycans are attached at residues N47 and N127. N-linked (GlcNAc...) asparagine glycosylation is found at N389, N419, and N545. Residues 693–713 (LVVAVAVVSCVFLTFVITLLA) traverse the membrane as a helical segment. Topologically, residues 714–932 (LRLRHWHSSH…KKKSGKKEKK (219 aa)) are cytoplasmic. Disordered stretches follow at residues 803 to 841 (DTPLVPQAPPNTDWRFSQAQRPGTSGSQNGDDTGTWPNN) and 902 to 932 (ATLTNAAGKRDGKAPAGGNGNKKKSGKKEKK). Polar residues predominate over residues 816 to 841 (WRFSQAQRPGTSGSQNGDDTGTWPNN). The span at 922-932 (NKKKSGKKEKK) shows a compositional bias: basic residues.

The protein resides in the cell membrane. Functionally, potential calcium-dependent cell-adhesion protein. May be involved in the establishment and maintenance of specific neuronal connections in the brain. The chain is Protocadherin gamma-A9 (PCDHGA9) from Pan troglodytes (Chimpanzee).